Here is a 285-residue protein sequence, read N- to C-terminus: Nucleotide-binding protein PFLU_0879 (285 aa).

8-15 (GRSGSGKS) lines the ATP pocket. 60–63 (DARN) contacts GTP.

Belongs to the RapZ-like family.

Displays ATPase and GTPase activities. This Pseudomonas fluorescens (strain SBW25) protein is Nucleotide-binding protein PFLU_0879.